An 806-amino-acid chain; its full sequence is Volume-regulated anion channel subunit LRRC8E (806 aa).

The Cytoplasmic segment spans residues 1 to 22 (MIPVAEFKQFTEQQPAFKVLKP). The chain crosses the membrane as a helical span at residues 23–43 (WWDVLAEYITYAMLMIGVFGC). At 44 to 130 (TLQVTQDKII…YETALHWYAK (87 aa)) the chain is on the extracellular side. Cys-54 and Cys-311 are joined by a disulfide. 2 N-linked (GlcNAc...) asparagine glycosylation sites follow: Asn-57 and Asn-80. A compositionally biased stretch (polar residues) spans 72 to 81 (YDQQSPPSND). Positions 72–103 (YDQQSPPSNDSDLETTIPPPTATSSPPREMSG) are disordered. The helical transmembrane segment at 131-151 (YFPYLVVIHTLIFIICGNFWF) threads the bilayer. Topologically, residues 152 to 275 (KFPGTSSKIE…MRQTVLKVCK (124 aa)) are cytoplasmic. Positions 182–213 (EVSGESSQEKPSQERSIDRELSKPNFEEGSPA) are disordered. Basic and acidic residues predominate over residues 188-207 (SQEKPSQERSIDRELSKPNF). A helical transmembrane segment spans residues 276-296 (FVLITIYNAVLVGKIHFIVPC). Residues 297 to 323 (SVHTEDMTGYNSFCCNHTKAHLFSKLA) lie on the Extracellular side of the membrane. The N-linked (GlcNAc...) asparagine glycan is linked to Asn-312. A helical transmembrane segment spans residues 324–344 (ITYLCFLGVYGLTCLYTLYWL). Over 345 to 806 (FRRPLKEYSF…VEVRDKLKED (462 aa)) the chain is Cytoplasmic. 10 LRR repeats span residues 544–566 (LKSLKVLTIKSNLSKIPATVADV), 569–589 (HLQKFSIHNDGTKLLTLNALK), 593–614 (LVKELELVRCELERIPHAVFSL), 616–637 (NLQVLDLKENTLHTIEEIISLQ), 641–662 (KLSVLRLWHNQIAYIPEHIRKL), 664–685 (GLEELSLNRNKILVIPSQLFLC), 687–708 (KLRHLDLSNNEIRELPPEIGVL), 710–731 (LLQYLGLSGNFLEDLPNELFFC), 733–754 (KLKTLKLGQNRLGNLSPKVGSL), and 756–777 (CLVKLELKGNRMDTLPPELGNC).

This sequence belongs to the LRRC8 family. As to quaternary structure, heterohexamer; oligomerizes with other LRRC8 proteins (lrrc8a, lrrc8c, lrrc8d and/or lrrc8b) to form a heterohexamer. Detected in a channel complex that contains lrrc8a, lrrc8c and lrrc8e. In vivo, the subunit composition may depend primarily on expression levels, and heterooligomeric channels containing various proportions of the different LRRC8 proteins may coexist.

It is found in the cell membrane. It localises to the endoplasmic reticulum membrane. The protein localises to the lysosome membrane. The catalysed reaction is chloride(in) = chloride(out). It catalyses the reaction iodide(out) = iodide(in). The enzyme catalyses taurine(out) = taurine(in). It carries out the reaction 2',3'-cGAMP(out) = 2',3'-cGAMP(in). Non-essential component of the volume-regulated anion channel (VRAC, also named VSOAC channel), an anion channel required to maintain a constant cell volume in response to extracellular or intracellular osmotic changes. The VRAC channel conducts iodide better than chloride and can also conduct organic osmolytes like taurine. Mediates efflux of amino acids, such as aspartate, in response to osmotic stress. The VRAC channel also mediates transport of immunoreactive cyclic dinucleotide GMP-AMP (2'-3'-cGAMP), an immune messenger produced in response to DNA virus in the cytosol. Channel activity requires lrrc8a plus at least one other family member (lrrc8b, lrrc8c, lrrc8d or lrrc8e); channel characteristics depend on the precise subunit composition. Also plays a role in lysosome homeostasis by forming functional lysosomal VRAC channels in response to low cytoplasmic ionic strength condition: lysosomal VRAC channels are necessary for the formation of large lysosome-derived vacuoles, which store and then expel excess water to maintain cytosolic water homeostasis. The chain is Volume-regulated anion channel subunit LRRC8E from Xenopus tropicalis (Western clawed frog).